The primary structure comprises 158 residues: uncharacterized protein (158 aa).

It is found in the mitochondrion. This is an uncharacterized protein from Arabidopsis thaliana (Mouse-ear cress).